We begin with the raw amino-acid sequence, 448 residues long: Deoxyguanosinetriphosphate triphosphohydrolase-like protein (448 aa).

Residues 67 to 260 (RLTHSLEVSQ…MELADDIAYG (194 aa)) enclose the HD domain.

It belongs to the dGTPase family. Type 2 subfamily.

This Aliivibrio fischeri (strain MJ11) (Vibrio fischeri) protein is Deoxyguanosinetriphosphate triphosphohydrolase-like protein.